Consider the following 252-residue polypeptide: 5'-nucleotidase SurE (252 aa).

Asp-8, Asp-9, Ser-42, and Asn-94 together coordinate a divalent metal cation.

Belongs to the SurE nucleotidase family. A divalent metal cation serves as cofactor.

It localises to the cytoplasm. It catalyses the reaction a ribonucleoside 5'-phosphate + H2O = a ribonucleoside + phosphate. Functionally, nucleotidase that shows phosphatase activity on nucleoside 5'-monophosphates. This chain is 5'-nucleotidase SurE, found in Ehrlichia ruminantium (strain Gardel).